Consider the following 206-residue polypeptide: Protein SYM1 (206 aa).

A run of 3 helical transmembrane segments spans residues 16–36, 103–123, and 155–175; these read PLITNIITTGFLFGSGDYLAQ, LVFAPFIGIPLYYSVMSVLEF, and LFNFALIPVQFRLLVVNIFSI.

This sequence belongs to the peroxisomal membrane protein PXMP2/4 family.

The protein localises to the mitochondrion inner membrane. Its function is as follows. May be involved in cellular response to stress. Required to maintain mitochondrial DNA (mtDNA) integrity and stability. This chain is Protein SYM1 (SYM1), found in Debaryomyces hansenii (strain ATCC 36239 / CBS 767 / BCRC 21394 / JCM 1990 / NBRC 0083 / IGC 2968) (Yeast).